Reading from the N-terminus, the 364-residue chain is Chorismate synthase (364 aa).

Arginine 48 provides a ligand contact to NADP(+). FMN is bound by residues 131–133 (RSS), 243–244 (NA), glycine 288, 303–307 (KPTSS), and arginine 329.

It belongs to the chorismate synthase family. Homotetramer. FMNH2 serves as cofactor.

The enzyme catalyses 5-O-(1-carboxyvinyl)-3-phosphoshikimate = chorismate + phosphate. Its pathway is metabolic intermediate biosynthesis; chorismate biosynthesis; chorismate from D-erythrose 4-phosphate and phosphoenolpyruvate: step 7/7. Functionally, catalyzes the anti-1,4-elimination of the C-3 phosphate and the C-6 proR hydrogen from 5-enolpyruvylshikimate-3-phosphate (EPSP) to yield chorismate, which is the branch point compound that serves as the starting substrate for the three terminal pathways of aromatic amino acid biosynthesis. This reaction introduces a second double bond into the aromatic ring system. The protein is Chorismate synthase of Brucella melitensis biotype 2 (strain ATCC 23457).